We begin with the raw amino-acid sequence, 238 residues long: Ribonuclease PH (238 aa).

Phosphate contacts are provided by residues arginine 87 and 125-127 (GTR).

Belongs to the RNase PH family. As to quaternary structure, homohexameric ring arranged as a trimer of dimers.

The enzyme catalyses tRNA(n+1) + phosphate = tRNA(n) + a ribonucleoside 5'-diphosphate. Its function is as follows. Phosphorolytic 3'-5' exoribonuclease that plays an important role in tRNA 3'-end maturation. Removes nucleotide residues following the 3'-CCA terminus of tRNAs; can also add nucleotides to the ends of RNA molecules by using nucleoside diphosphates as substrates, but this may not be physiologically important. Probably plays a role in initiation of 16S rRNA degradation (leading to ribosome degradation) during starvation. The protein is Ribonuclease PH of Synechococcus elongatus (strain ATCC 33912 / PCC 7942 / FACHB-805) (Anacystis nidulans R2).